A 564-amino-acid polypeptide reads, in one-letter code: MSYPADDYESEAAYDPYAYPSDYDMHTGDPKQDLAYERQYEQQTYQVIPEVIKNFIQYFHKTVSDLIDQKVYELQASRVSSDVIDQKVYEIQDIYENSWTKLTERFFKNTPWPEAEAIAPQVGNDAVFLILYKELYYRHIYAKVSGGPSLEQRFESYYNYCNLFNYILNADGPAPLELPNQWLWDIIDEFIYQFQSFSQYRCKTAKKSEEEIDFLRSNPKIWNVHSVLNVLHSLVDKSNINRQLEVYTSGGDPESVAGEYGRHSLYKMLGYFSLVGLLRLHSLLGDYYQAIKVLENIELNKKSMYSRVPECQVTTYYYVGFAYLTMRRYQDAIRVFANILLYIQRTKSMFQRTTYKYEMINKQNEQMHALLAIALTMYPMRIDESIHLQLREKYGDKMLRMQKGDPQVYEELFSYSCPKFLSPVVPNYDNVHPNYHKEPFLQQLKVFSDEVQQQAQLSTIRSFLKLYTTMPVAKLAGFLDLTEQEFRIQLLVFKHKMKNLVWTSGISALDGEFQSASEVDFYIDKDMIHIADTKVARRYGDFFIRQIHKFEELNRTLKKMGQRP.

N-acetylserine is present on serine 2. The residue at position 21 (serine 21) is a Phosphoserine. One can recognise a PCI domain in the interval aspartate 331 to arginine 537. Residues lysine 465 and lysine 549 each carry the N6-acetyllysine modification.

Belongs to the eIF-3 subunit L family. As to quaternary structure, component of the eukaryotic translation initiation factor 3 (eIF-3) complex, which is composed of 13 subunits: EIF3A, EIF3B, EIF3C, EIF3D, EIF3E, EIF3F, EIF3G, EIF3H, EIF3I, EIF3J, EIF3K, EIF3L and EIF3M. The eIF-3 complex appears to include 3 stable modules: module A is composed of EIF3A, EIF3B, EIF3G and EIF3I; module B is composed of EIF3F, EIF3H, and EIF3M; and module C is composed of EIF3C, EIF3D, EIF3E, EIF3K and EIF3L. EIF3C of module C binds EIF3B of module A and EIF3H of module B, thereby linking the three modules. EIF3J is a labile subunit that binds to the eIF-3 complex via EIF3B. The eIF-3 complex interacts with RPS6KB1 under conditions of nutrient depletion. Mitogenic stimulation leads to binding and activation of a complex composed of MTOR and RPTOR, leading to phosphorylation and release of RPS6KB1 and binding of EIF4B to eIF-3. Interacts with RRN3.

Its subcellular location is the cytoplasm. Component of the eukaryotic translation initiation factor 3 (eIF-3) complex, which is required for several steps in the initiation of protein synthesis. The eIF-3 complex associates with the 40S ribosome and facilitates the recruitment of eIF-1, eIF-1A, eIF-2:GTP:methionyl-tRNAi and eIF-5 to form the 43S pre-initiation complex (43S PIC). The eIF-3 complex stimulates mRNA recruitment to the 43S PIC and scanning of the mRNA for AUG recognition. The eIF-3 complex is also required for disassembly and recycling of post-termination ribosomal complexes and subsequently prevents premature joining of the 40S and 60S ribosomal subunits prior to initiation. The eIF-3 complex specifically targets and initiates translation of a subset of mRNAs involved in cell proliferation, including cell cycling, differentiation and apoptosis, and uses different modes of RNA stem-loop binding to exert either translational activation or repression. This chain is Eukaryotic translation initiation factor 3 subunit L, found in Pan troglodytes (Chimpanzee).